Consider the following 295-residue polypeptide: Acetylglutamate kinase (295 aa).

Substrate-binding positions include 66–67, Arg88, and Asn193; that span reads GG.

Belongs to the acetylglutamate kinase family. ArgB subfamily.

The protein resides in the cytoplasm. It carries out the reaction N-acetyl-L-glutamate + ATP = N-acetyl-L-glutamyl 5-phosphate + ADP. It functions in the pathway amino-acid biosynthesis; L-arginine biosynthesis; N(2)-acetyl-L-ornithine from L-glutamate: step 2/4. In terms of biological role, catalyzes the ATP-dependent phosphorylation of N-acetyl-L-glutamate. The chain is Acetylglutamate kinase from Rhizobium johnstonii (strain DSM 114642 / LMG 32736 / 3841) (Rhizobium leguminosarum bv. viciae).